Reading from the N-terminus, the 260-residue chain is 3'-5' ssDNA/RNA exonuclease TatD (260 aa).

Residues glutamate 92, histidine 128, and histidine 153 each coordinate a divalent metal cation.

This sequence belongs to the metallo-dependent hydrolases superfamily. TatD-type hydrolase family. TatD subfamily. Monomer. It depends on Mg(2+) as a cofactor.

It is found in the cytoplasm. Its function is as follows. 3'-5' exonuclease that prefers single-stranded DNA and RNA. May play a role in the H(2)O(2)-induced DNA damage repair. The polypeptide is 3'-5' ssDNA/RNA exonuclease TatD (Edwardsiella piscicida).